A 1880-amino-acid chain; its full sequence is Nonribosomal peptide synthetase otaB (1880 aa).

The tract at residues 205 to 594 (AQAVERGNSI…SVSFVGRRQA (390 aa)) is adenylation 1. Residues 728–804 (LPLSPLERQI…ELGAHLEQEA (77 aa)) enclose the Carrier domain. Serine 765 carries the O-(pantetheine 4'-phosphoryl)serine modification. The interval 840 to 1250 (EDVYPCTALQ…LLSPQDQQQL (411 aa)) is condensation. An adenylation 2 region spans residues 1269-1665 (QRQCLAHPQK…GRKDRQVKLR (397 aa)).

It belongs to the NRP synthetase family.

It carries out the reaction 7-carboxymellein + L-phenylalanine + ATP = ochratoxin B + ADP + phosphate + H(+). Its pathway is mycotoxin biosynthesis. In terms of biological role, nonribosomal peptide synthetase; part of the gene cluster that mediates the biosynthesis of ochratoxin A (OTA), a mycotoxin composed of a chlorinated type I polyketide dihydroisocoumarin moiety linked to L-phenylalanine, and demonstrated to have nephrotoxic, immunotoxic, genotoxic, neurotoxic, and teratogenic properties. OtaB is responsible for the linking of phenylalanine to the dihydroisocoumarin ring. The pathway begins with the highly reducing polyketide synthase otaA that catalyzes the formation of the isocoumarin group during the initial stages of biosynthesis, starting from one acetate and 4 malonate units, to originate the characteristic pentaketide skeleton 7-methylmellein (7-MM) of the OTA molecule. The newly identified cyclase otaY might be involved in the polyketide cyclization reaction during the initial steps of the OTA biosynthesis. 7-MM is then oxidized into 7-carboxymellein (also called ochratoxin beta) by the cytochrome P450 monooxygenase otaC. The NRPS encoded by the otaB gene is involved in the linking of phenylalanine to the dihydroisocoumarin ring. The reaction catalyzed by NRPS results in the production of ochratoxin B (OTB), which is the non-chlorinated analog of OTA and which subsequently serves as the substrate of the halogenase otaD for chlorination activity to form the final molecular structure of OTA, containing a chlorine atom in the C-5 position of the molecule. This chain is Nonribosomal peptide synthetase otaB, found in Aspergillus niger (strain ATCC MYA-4892 / CBS 513.88 / FGSC A1513).